A 1199-amino-acid chain; its full sequence is Ecdysone-induced protein 75B, isoforms C/D (1199 aa).

Residues 130 to 182 form a disordered region; sequence TTDGPTAVLQQQQPQQQMPQHFESLPHHHPQQEHQPQQQQQQHHLQHHPHPHV. Low complexity-rich tracts occupy residues 139–149 and 162–172; these read QQQQPQQQMPQ and EHQPQQQQQQH. The nuclear receptor DNA-binding region spans 242-318; the sequence is TVLCRVCGDK…VGMSRDAVRF (77 aa). NR C4-type zinc fingers lie at residues 245–265 and 282–306; these read CRVC…CEGC and CTKN…LKKC. The NR LBD domain maps to 352 to 600; sequence DQPRLLAAVL…QQMWSMEDGN (249 aa). Disordered stretches follow at residues 624 to 665, 771 to 808, 831 to 851, 895 to 961, 991 to 1104, and 1155 to 1188; these read KSPL…SALA, LDSP…SVDD, VSVS…KRQI, AEAD…SSHS, ENST…SNSA, and VTVT…NPGL. 5 stretches are compositionally biased toward low complexity: residues 641 to 653, 792 to 804, 831 to 845, 897 to 942, and 950 to 961; these read GSPS…GVSL, SSGG…SPRS, VSVS…STSS, ADAS…AQSQ, and SSPKASMASSHS. Composition is skewed to polar residues over residues 993 to 1006 and 1018 to 1040; these read STAA…VGNR and AVQN…QRQQ. Composition is skewed to low complexity over residues 1041 to 1077, 1086 to 1104, and 1159 to 1187; these read SVSP…SASS, STSN…SNSA, and ASNG…PNPG.

This sequence belongs to the nuclear hormone receptor family. NR1 subfamily.

The protein resides in the nucleus. Its function is as follows. Implicated in the regulation of ecdysone-triggered gene hierarchies. Probably plays a key role in mediating the regulation of the larval molt by 20-OH-ecdysone. In Drosophila melanogaster (Fruit fly), this protein is Ecdysone-induced protein 75B, isoforms C/D (Eip75B).